The following is a 665-amino-acid chain: tRNA 5-methylaminomethyl-2-thiouridine biosynthesis bifunctional protein MnmC (665 aa).

A tRNA (mnm(5)s(2)U34)-methyltransferase region spans residues 1–243 (MSQTSLHHAR…KREMLAGERA (243 aa)). The interval 268–665 (IGGGIASAMT…RKLLKGKPLQ (398 aa)) is FAD-dependent cmnm(5)s(2)U34 oxidoreductase.

The protein in the N-terminal section; belongs to the methyltransferase superfamily. tRNA (mnm(5)s(2)U34)-methyltransferase family. This sequence in the C-terminal section; belongs to the DAO family. It depends on FAD as a cofactor.

Its subcellular location is the cytoplasm. The catalysed reaction is 5-aminomethyl-2-thiouridine(34) in tRNA + S-adenosyl-L-methionine = 5-methylaminomethyl-2-thiouridine(34) in tRNA + S-adenosyl-L-homocysteine + H(+). Functionally, catalyzes the last two steps in the biosynthesis of 5-methylaminomethyl-2-thiouridine (mnm(5)s(2)U) at the wobble position (U34) in tRNA. Catalyzes the FAD-dependent demodification of cmnm(5)s(2)U34 to nm(5)s(2)U34, followed by the transfer of a methyl group from S-adenosyl-L-methionine to nm(5)s(2)U34, to form mnm(5)s(2)U34. In Aeromonas hydrophila subsp. hydrophila (strain ATCC 7966 / DSM 30187 / BCRC 13018 / CCUG 14551 / JCM 1027 / KCTC 2358 / NCIMB 9240 / NCTC 8049), this protein is tRNA 5-methylaminomethyl-2-thiouridine biosynthesis bifunctional protein MnmC.